Here is a 356-residue protein sequence, read N- to C-terminus: uncharacterized protein (356 aa).

Its subcellular location is the cytoplasm. It is found in the nucleus. This is an uncharacterized protein from Saccharomyces cerevisiae (strain ATCC 204508 / S288c) (Baker's yeast).